We begin with the raw amino-acid sequence, 815 residues long: MDVADAQIGQLRVKDDVGIRTQKLFQDFLEEFKENGEIKYTRPAANLESPDRCTLEVSFEDVEKYDQNLATAIIEEYYHVYPFLCQSVSNYVKDRIGLKTNKDCYVAFTEVPTRHKVRDLTTSKIGTLIRISGQVVRTHPVHPELVSGTFMCLDCQTEIRNVEQQFKFTNPTICRNPVCSNRRRFMLDVEKSLFLDFQKIRIQETQAELPRGCIPRAVEIILRSELVETVQAGDRYDFTGTLIVVPDVSVLAMPGTRAESGSRHKPGEGMEGVTGLKALGMRELNYRMAFLACSVQATTARFGGTDLPMSEVTAEDMKKQMTDAEWHKIYEMSKDRNLYQNLITCLFPSIYGNDEVKRGILLQLFGGVAKTTIEKTSLRGDVNVCIVGDPSTAKSQFLKQVSDFSPRAIYTSGKASSAAGLTAAVVRDEESFDFVIEAGALMLADNGICCIDEFDKMDLRDQVAIHEAMEQQTISIARAGVRATLNARTSILAAANPINGRYDRSKSLQQNIQLSAPIMSRFDLFFILVDECNEVVDYAIARKIVDLHSNIEESVERAYSREEVLRYVTFARQFKPIIGQEAGKMLVENYGHLRQRDTGTAGRSTWRITVRQLESMIRLSEAMAKLECSNRVLERHVKEAFRLLNKSIIRVEQPDIHLDDDDDLDVDDGIQDDIDMENNGSAANTETDTLDTSGASTVQKKKFTLSFEDYKNLSTMLVLHMRGEEARCEVEGSDSGMKRSDVVTWYLEQVADQIESEDELISRKNLIEKLIDRLIYHDQVIIPLKTSNLSRIKGPAEEQVDNDPLLVVHPNYVVD.

The segment at 152 to 179 (CLDCQTEIRNVEQQFKFTNPTICRNPVC) adopts a C4-type zinc-finger fold. One can recognise an MCM domain in the interval 338–544 (LYQNLITCLF…VVDYAIARKI (207 aa)). ATP-binding residues include Ser-391, Thr-392, Ala-393, Lys-394, Ser-395, and Asn-496. The short motif at 520 to 523 (SRFD) is the Arginine finger element. The ADP site is built by Arg-611 and Glu-614. A disordered region spans residues 672 to 693 (DDIDMENNGSAANTETDTLDTS). Polar residues predominate over residues 678 to 693 (NNGSAANTETDTLDTS).

The protein belongs to the MCM family. Component of the Mcm2-7 complex. The complex forms a toroidal hexameric ring with the proposed subunit order Mcm2-Mcm6-Mcm4-Mcm7-Mcm3-Mcm5. The heterodimers of mcm4/mcm6 and mcm3/mcm5 interact with mcm2 and mcm7.

It localises to the nucleus. It carries out the reaction ATP + H2O = ADP + phosphate + H(+). In terms of biological role, acts as a component of the Mcm2-7 complex (Mcm complex) which is the putative replicative helicase essential for 'once per cell cycle' DNA replication initiation and elongation in eukaryotic cells. Core component of CDC45-MCM-GINS (CMG) helicase, the molecular machine that unwinds template DNA during replication, and around which the replisome is built. The active ATPase sites in the Mcm2-7 ring are formed through the interaction surfaces of two neighboring subunits such that a critical structure of a conserved arginine finger motif is provided in trans relative to the ATP-binding site of the Walker A box of the adjacent subunit. The six ATPase active sites, however, are likely to contribute differentially to the complex helicase activity Required for DNA replication and cell proliferation. Required for mitotic cycles, endocycles, and the special S phase associated with the amplification of chorion genes; has a role in origin unwinding or fork elongation at chorion loci. Its function is as follows. Acts as a component of the MCM2-7 complex (MCM complex) which is the replicative helicase essential for 'once per cell cycle' DNA replication initiation and elongation in eukaryotic cells. Core component of CDC45-MCM-GINS (CMG) helicase, the molecular machine that unwinds template DNA during replication, and around which the replisome is built. The active ATPase sites in the MCM2-7 ring are formed through the interaction surfaces of two neighboring subunits such that a critical structure of a conserved arginine finger motif is provided in trans relative to the ATP-binding site of the Walker A box of the adjacent subunit. The six ATPase active sites, however, are likely to contribute differentially to the complex helicase activity. The sequence is that of DNA replication licensing factor Mcm6 (Mcm6) from Drosophila pseudoobscura pseudoobscura (Fruit fly).